The following is a 221-amino-acid chain: MTTLFIVGTDTEVGKTVVTSALAAYWQTYHSSESLGVIKLLQTGIGDVEHYQRLLPHVEVVNPLRYETPVAPPVAAEKENRSIPLDQVWQGLNDLQQRKNLVLAEGLGGLGSPVTWELTVADLAGEWGLPTVLVVPVKLGAIAQTVANVALARQYKVNLKGIIFSCPRPLSHEEIVNFAPITLIESLTKTPVLGMISYLENIEDITKLAHIASSLDLEMLF.

Residue 12–17 (EVGKTV) coordinates ATP. Thr16 contributes to the Mg(2+) binding site. The active site involves Lys39. A substrate-binding site is contributed by Thr43. Residues Asp47, 105 to 108 (EGLG), and 165 to 166 (SC) contribute to the ATP site. The Mg(2+) site is built by Asp47 and Glu105.

Belongs to the dethiobiotin synthetase family. As to quaternary structure, homodimer. Mg(2+) serves as cofactor.

The protein localises to the cytoplasm. The catalysed reaction is (7R,8S)-7,8-diammoniononanoate + CO2 + ATP = (4R,5S)-dethiobiotin + ADP + phosphate + 3 H(+). It carries out the reaction (7R,8S)-8-amino-7-(carboxyamino)nonanoate + ATP = (4R,5S)-dethiobiotin + ADP + phosphate + H(+). Its pathway is cofactor biosynthesis; biotin biosynthesis; biotin from 7,8-diaminononanoate: step 1/2. Functionally, catalyzes a mechanistically unusual reaction, the ATP-dependent insertion of CO2 between the N7 and N8 nitrogen atoms of 7,8-diaminopelargonic acid (DAPA, also called 7,8-diammoniononanoate) to form a ureido ring. This cyanobacterium does not encode bioA (which catalyzes the formation of the precursor for this reaction in the cannonical pathway), instead it encodes bioU, which replaces bioA and also performs the first half of the cannonical BioD reaction. Thus in this organism BioD has a different substrate. The chain is ATP-dependent dethiobiotin synthetase BioD from Crocosphaera subtropica (strain ATCC 51142 / BH68) (Cyanothece sp. (strain ATCC 51142)).